Reading from the N-terminus, the 132-residue chain is D-ribose pyranase (132 aa).

H20 acts as the Proton donor in catalysis. Residues D28, H98, and 121–123 (YSN) each bind substrate.

The protein belongs to the RbsD / FucU family. RbsD subfamily. In terms of assembly, homodecamer.

The protein localises to the cytoplasm. The enzyme catalyses beta-D-ribopyranose = beta-D-ribofuranose. It functions in the pathway carbohydrate metabolism; D-ribose degradation; D-ribose 5-phosphate from beta-D-ribopyranose: step 1/2. Its function is as follows. Catalyzes the interconversion of beta-pyran and beta-furan forms of D-ribose. This chain is D-ribose pyranase, found in Kosmotoga olearia (strain ATCC BAA-1733 / DSM 21960 / TBF 19.5.1).